A 183-amino-acid chain; its full sequence is Capsid protein (183 aa).

The disordered stretch occupies residues 136–183; that stretch reads NAPILSTLPETTVVRRRGRSPRRRTPSPRRRRSQSPRRRRSQSRESQC. Over residues 149 to 176 the composition is skewed to basic residues; it reads VRRRGRSPRRRTPSPRRRRSQSPRRRRS. Ser-155, Ser-162, and Ser-170 each carry phosphoserine; by host. The 1; half-length repeat unit spans residues 155–161; sequence SPRRRTP. A 3 X 8 AA repeats of S-P-R-R-R-[PR]-S-Q region spans residues 155-177; that stretch reads SPRRRTPSPRRRRSQSPRRRRSQ. Positions 158 to 175 match the Bipartite nuclear localization signal motif; the sequence is RRTPSPRRRRSQSPRRRR. Tandem repeats lie at residues 162 to 169 and 170 to 177. The interval 177 to 183 is RNA binding; the sequence is QSRESQC.

Belongs to the orthohepadnavirus core antigen family. As to quaternary structure, homodimerizes, then multimerizes. Interacts with cytosol exposed regions of viral L glycoprotein present in the reticulum-to-Golgi compartment. Interacts with human FLNB. Phosphorylated form interacts with host importin alpha; this interaction depends on the exposure of the NLS, which itself depends upon genome maturation and/or phosphorylation of the capsid protein. Interacts with host NUP153. Post-translationally, phosphorylated by host SRPK1, SRPK2, and maybe protein kinase C or GAPDH. Phosphorylation is critical for pregenomic RNA packaging. Protein kinase C phosphorylation is stimulated by HBx protein and may play a role in transport of the viral genome to the nucleus at the late step during the viral replication cycle.

It is found in the virion. The protein localises to the host cytoplasm. Self assembles to form an icosahedral capsid. Most capsids appear to be large particles with an icosahedral symmetry of T=4 and consist of 240 copies of capsid protein, though a fraction forms smaller T=3 particles consisting of 180 capsid proteins. Entering capsids are transported along microtubules to the nucleus. Phosphorylation of the capsid is thought to induce exposure of nuclear localization signal in the C-terminal portion of the capsid protein that allows binding to the nuclear pore complex via the importin (karyopherin-) alpha and beta. Capsids are imported in intact form through the nuclear pore into the nuclear basket, where it probably binds NUP153. Only capsids that contain the mature viral genome can release the viral DNA and capsid protein into the nucleoplasm. Immature capsids get stuck in the basket. Capsids encapsulate the pre-genomic RNA and the P protein. Pre-genomic RNA is reverse-transcribed into DNA while the capsid is still in the cytoplasm. The capsid can then either be directed to the nucleus, providing more genomes for transcription, or bud through the endoplasmic reticulum to provide new virions. The sequence is that of Capsid protein from Homo sapiens (Human).